We begin with the raw amino-acid sequence, 371 residues long: Glycosyltransferase 8 domain-containing protein 1 (371 aa).

Topologically, residues 1–7 (MSFRKVN) are cytoplasmic. The chain crosses the membrane as a helical; Signal-anchor for type II membrane protein span at residues 8-28 (IVILVLAVALFLLVLHHNFLG). The Lumenal segment spans residues 29–371 (LSSLLRNEVS…RRHVEISNTK (343 aa)). N103 and N257 each carry an N-linked (GlcNAc...) asparagine glycan.

This sequence belongs to the glycosyltransferase 8 family.

Its subcellular location is the membrane. This Bos taurus (Bovine) protein is Glycosyltransferase 8 domain-containing protein 1 (GLT8D1).